The primary structure comprises 1353 residues: DNA-directed RNA polymerase subunit beta' (1353 aa).

The segment at 1–117 (MSDNRLFTSV…AFQKLNDLFK (117 aa)) is unknown. Positions 118–1353 (LYNHFPSISS…SELTKKTNQN (1236 aa)) are DNA-directed RNA polymerase subunit beta'. Zn(2+)-binding residues include cysteine 189, cysteine 191, cysteine 203, and cysteine 206. The Mg(2+) site is built by aspartate 578, aspartate 580, and aspartate 582.

It belongs to the RNA polymerase beta' chain family. The RNAP catalytic core consists of 2 alpha, 1 beta, 1 beta' and 1 omega subunit. When a sigma factor is associated with the core the holoenzyme is formed, which can initiate transcription. Requires Mg(2+) as cofactor. The cofactor is Zn(2+).

The catalysed reaction is RNA(n) + a ribonucleoside 5'-triphosphate = RNA(n+1) + diphosphate. In terms of biological role, DNA-dependent RNA polymerase catalyzes the transcription of DNA into RNA using the four ribonucleoside triphosphates as substrates. In Aster yellows witches'-broom phytoplasma (strain AYWB), this protein is DNA-directed RNA polymerase subunit beta'.